A 468-amino-acid chain; its full sequence is Cysteine--tRNA ligase (468 aa).

Residue Cys33 participates in Zn(2+) binding. Residues 35–45 (ATVQGLPHIGH) carry the 'HIGH' region motif. Residues Cys211, His236, and Glu240 each contribute to the Zn(2+) site. The 'KMSKS' region signature appears at 267–271 (KMSKS). Position 270 (Lys270) interacts with ATP.

It belongs to the class-I aminoacyl-tRNA synthetase family. In terms of assembly, monomer. Zn(2+) serves as cofactor.

The protein resides in the cytoplasm. The enzyme catalyses tRNA(Cys) + L-cysteine + ATP = L-cysteinyl-tRNA(Cys) + AMP + diphosphate. In Mycobacterium avium (strain 104), this protein is Cysteine--tRNA ligase.